The primary structure comprises 442 residues: GTPase Der (442 aa).

2 consecutive EngA-type G domains span residues 3-167 (PTIV…PADD) and 177-350 (PRVA…AAAM). GTP contacts are provided by residues 9–16 (GRPNVGKS), 56–60 (DTAGF), 119–122 (NKAE), 183–190 (GRPNVGKS), 230–234 (DTAGL), and 295–298 (NKWD). The KH-like domain maps to 351–435 (SNLSTPRLTR…PLRIQFRTAH (85 aa)).

Belongs to the TRAFAC class TrmE-Era-EngA-EngB-Septin-like GTPase superfamily. EngA (Der) GTPase family. As to quaternary structure, associates with the 50S ribosomal subunit.

GTPase that plays an essential role in the late steps of ribosome biogenesis. The chain is GTPase Der from Azoarcus sp. (strain BH72).